We begin with the raw amino-acid sequence, 225 residues long: LexA repressor (225 aa).

The segment at residues 26 to 46 (YEEMKDSLNLKSKSGIHRLIS) is a DNA-binding region (H-T-H motif). Residues S146 and K184 each act as for autocatalytic cleavage activity in the active site.

Belongs to the peptidase S24 family. In terms of assembly, homodimer.

It catalyses the reaction Hydrolysis of Ala-|-Gly bond in repressor LexA.. Functionally, represses a number of genes involved in the response to DNA damage (SOS response), including recA and lexA. In the presence of single-stranded DNA, RecA interacts with LexA causing an autocatalytic cleavage which disrupts the DNA-binding part of LexA, leading to derepression of the SOS regulon and eventually DNA repair. In Pelagibacter ubique (strain HTCC1062), this protein is LexA repressor.